We begin with the raw amino-acid sequence, 157 residues long: Phosphopantetheine adenylyltransferase (157 aa).

Position 10 (Thr-10) interacts with substrate. ATP-binding positions include 10–11 and His-18; that span reads TF. Residues Lys-42, Leu-74, and Arg-88 each contribute to the substrate site. ATP is bound by residues 89-91, Glu-99, and 124-130; these read GLR and NAFISSS.

The protein belongs to the bacterial CoaD family. As to quaternary structure, homohexamer. It depends on Mg(2+) as a cofactor.

The protein resides in the cytoplasm. It carries out the reaction (R)-4'-phosphopantetheine + ATP + H(+) = 3'-dephospho-CoA + diphosphate. It functions in the pathway cofactor biosynthesis; coenzyme A biosynthesis; CoA from (R)-pantothenate: step 4/5. Its function is as follows. Reversibly transfers an adenylyl group from ATP to 4'-phosphopantetheine, yielding dephospho-CoA (dPCoA) and pyrophosphate. This Helicobacter pylori (strain J99 / ATCC 700824) (Campylobacter pylori J99) protein is Phosphopantetheine adenylyltransferase.